The primary structure comprises 230 residues: Small ribosomal subunit protein uS3 (230 aa).

The KH type-2 domain occupies 43 to 95; that stretch reads VNRVIIYSARPKMISEERKAHLAKLLELKFGLEKPVIEVLPIENPNLDAHVIA.

Belongs to the universal ribosomal protein uS3 family. Part of the 30S ribosomal subunit.

Functionally, binds the lower part of the 30S subunit head. The protein is Small ribosomal subunit protein uS3 of Nanoarchaeum equitans (strain Kin4-M).